A 440-amino-acid polypeptide reads, in one-letter code: Ribosomal protein uS12 methylthiotransferase RimO (440 aa).

In terms of domain architecture, MTTase N-terminal spans 6-116 (PKVGFVSLGC…VVTAVHEVVP (111 aa)). The [4Fe-4S] cluster site is built by Cys15, Cys51, Cys80, Cys149, Cys153, and Cys156. Residues 135-373 (LTPRHYAYLK…MAHQQAISAA (239 aa)) form the Radical SAM core domain. Residues 376 to 440 (QLKVGKEIEV…DEYDLWAELV (65 aa)) enclose the TRAM domain.

This sequence belongs to the methylthiotransferase family. RimO subfamily. [4Fe-4S] cluster is required as a cofactor.

Its subcellular location is the cytoplasm. It catalyses the reaction L-aspartate(89)-[ribosomal protein uS12]-hydrogen + (sulfur carrier)-SH + AH2 + 2 S-adenosyl-L-methionine = 3-methylsulfanyl-L-aspartate(89)-[ribosomal protein uS12]-hydrogen + (sulfur carrier)-H + 5'-deoxyadenosine + L-methionine + A + S-adenosyl-L-homocysteine + 2 H(+). Its function is as follows. Catalyzes the methylthiolation of an aspartic acid residue of ribosomal protein uS12. The polypeptide is Ribosomal protein uS12 methylthiotransferase RimO (Pseudomonas aeruginosa (strain ATCC 15692 / DSM 22644 / CIP 104116 / JCM 14847 / LMG 12228 / 1C / PRS 101 / PAO1)).